We begin with the raw amino-acid sequence, 409 residues long: LL-diaminopimelate aminotransferase (409 aa).

Substrate is bound by residues tyrosine 15 and glycine 42. Residues tyrosine 72, 108–109, tyrosine 132, asparagine 186, tyrosine 217, and 245–247 contribute to the pyridoxal 5'-phosphate site; these read AK and SFS. The substrate site is built by lysine 109, tyrosine 132, and asparagine 186. The residue at position 248 (lysine 248) is an N6-(pyridoxal phosphate)lysine. Arginine 256 and asparagine 291 together coordinate pyridoxal 5'-phosphate. Substrate contacts are provided by asparagine 291 and arginine 387.

Belongs to the class-I pyridoxal-phosphate-dependent aminotransferase family. LL-diaminopimelate aminotransferase subfamily. Homodimer. Requires pyridoxal 5'-phosphate as cofactor.

The catalysed reaction is (2S,6S)-2,6-diaminopimelate + 2-oxoglutarate = (S)-2,3,4,5-tetrahydrodipicolinate + L-glutamate + H2O + H(+). Its pathway is amino-acid biosynthesis; L-lysine biosynthesis via DAP pathway; LL-2,6-diaminopimelate from (S)-tetrahydrodipicolinate (aminotransferase route): step 1/1. Its function is as follows. Involved in the synthesis of meso-diaminopimelate (m-DAP or DL-DAP), required for both lysine and peptidoglycan biosynthesis. Catalyzes the direct conversion of tetrahydrodipicolinate to LL-diaminopimelate. This chain is LL-diaminopimelate aminotransferase, found in Parabacteroides distasonis (strain ATCC 8503 / DSM 20701 / CIP 104284 / JCM 5825 / NCTC 11152).